Reading from the N-terminus, the 956-residue chain is Calsyntenin-3 (956 aa).

An N-terminal signal peptide occupies residues 1 to 19 (MTLLLLPLLLASLLASCSC). The Extracellular segment spans residues 20–847 (NKANKHKPWI…SHRNSMIPSA (828 aa)). 2 Cadherin domains span residues 29–145 (IEAE…APVF) and 146–246 (VERL…KPSW). N299, N327, N347, N507, and N740 each carry an N-linked (GlcNAc...) asparagine glycan. Residues 848–868 (ATLIIVVCVGFLVLMVVLGLV) form a helical membrane-spanning segment. The Cytoplasmic portion of the chain corresponds to 869 to 956 (RIHSLHRRVS…RIIETPPHRY (88 aa)). A disordered region spans residues 917–956 (ACVTGAVGGQQEDEDSSDSEVADSPSSDERRIIETPPHRY). Residues 927–937 (QEDEDSSDSEV) show a composition bias toward acidic residues. A compositionally biased stretch (basic and acidic residues) spans 943–956 (SDERRIIETPPHRY).

It belongs to the calsyntenin family. As to quaternary structure, interacts (via cadherin domains) with both alpha and beta isoforms of neurexins (NRXN1, NRXN2 and NRXN3). Directly interacts with APBA2. Forms a tripartite complex with APBA2 and APP. Interacts with low affinity with KLC1. Interacts with SLC23A2/SVCT2. Post-translationally, proteolytically processed under normal cellular conditions. A primary zeta-cleavage generates a large extracellular (soluble) N-terminal domain (sAlc) and a short C-terminal transmembrane fragment (CTF1). A secondary cleavage catalyzed by gamma-secretase within the transmembrane domain releases the beta-Alc-beta chain in the extracellular milieu and produces an intracellular fragment (AlcICD). This processing is strongly suppressed in the tripartite complex formed with APBA2 and APP, which seems to prevent the association with gamma-secretase.

It is found in the postsynaptic cell membrane. Its subcellular location is the endoplasmic reticulum membrane. The protein resides in the golgi apparatus membrane. It localises to the cell projection. The protein localises to the dendrite. Postsynaptic adhesion molecule that binds to presynaptic neurexins to mediate both excitatory and inhibitory synapse formation. Promotes synapse development by acting as a cell adhesion molecule at the postsynaptic membrane, which associates with both neurexin-alpha and neurexin-beta proteins at the presynaptic membrane. Regulates the balance between excitatory and inhibitory synapses by inhibiting formation of excitatory parallel-fiber synapses and promoting formation of inhibitory synapses in the same neuron. May also be involved in ascorbate (vitamin C) uptake via its interaction with SLC23A2/SVCT2. Complex formation with APBA2 and APP, stabilizes APP metabolism and enhances APBA2-mediated suppression of beta-APP40 secretion, due to the retardation of intracellular APP maturation. In Pongo abelii (Sumatran orangutan), this protein is Calsyntenin-3 (CLSTN3).